Reading from the N-terminus, the 187-residue chain is Ubiquinone biosynthesis protein COQ4 homolog, mitochondrial (187 aa).

4 residues coordinate Zn(2+): His-77, Asp-78, His-81, and Glu-93.

The protein belongs to the COQ4 family. In terms of assembly, component of a multi-subunit COQ enzyme complex. The cofactor is Zn(2+).

The protein resides in the mitochondrion inner membrane. The enzyme catalyses a 4-hydroxy-3-methoxy-5-(all-trans-polyprenyl)benzoate + H(+) = a 2-methoxy-6-(all-trans-polyprenyl)phenol + CO2. Its pathway is cofactor biosynthesis; ubiquinone biosynthesis. Functionally, lyase that catalyzes the C1-decarboxylation of 4-hydroxy-3-methoxy-5-(all-trans-polyprenyl)benzoic acid into 2-methoxy-6-(all-trans-polyprenyl)phenol during ubiquinone biosynthesis. This is Ubiquinone biosynthesis protein COQ4 homolog, mitochondrial from Leishmania braziliensis.